Reading from the N-terminus, the 92-residue chain is Small ribosomal subunit protein uS19 (92 aa).

Belongs to the universal ribosomal protein uS19 family.

Functionally, protein S19 forms a complex with S13 that binds strongly to the 16S ribosomal RNA. In Corynebacterium aurimucosum (strain ATCC 700975 / DSM 44827 / CIP 107346 / CN-1) (Corynebacterium nigricans), this protein is Small ribosomal subunit protein uS19.